A 267-amino-acid polypeptide reads, in one-letter code: Corrinoid adenosyltransferase EutT (267 aa).

A divalent metal cation contacts are provided by Cys-80 and Cys-83.

The protein belongs to the Cob(I)alamin adenosyltransferase family. EutT subfamily. Homodimer. It depends on a divalent metal cation as a cofactor.

It localises to the bacterial microcompartment. It catalyses the reaction 2 cob(II)alamin + reduced [electron-transfer flavoprotein] + 2 ATP + 2 H2O = 2 adenosylcob(III)alamin + oxidized [electron-transfer flavoprotein] + 2 phosphate + 2 diphosphate + 3 H(+). It carries out the reaction 2 cob(II)inamide + reduced [electron-transfer flavoprotein] + 2 ATP + 2 H2O = 2 adenosylcob(III)inamide + oxidized [electron-transfer flavoprotein] + 2 phosphate + 2 diphosphate + 3 H(+). It functions in the pathway amine and polyamine degradation; ethanolamine degradation. Its function is as follows. Converts cyanocobalamin (CN-B12) to adenosylcobalamin (AdoCbl), the inducer of the eut operon. Is not active on cobinamide nor other intermediates in the adenosylcobalamin synthetic pathway. Allows full induction of the eut operon. Can use ADP, CTP and dATP in place of ATP, and cobinamide in place of cobalamin, none are as efficiently used as ATP and cobalamin. Functionally, expression of the eut operon allows this bacteria to use ethanolamine (EA) as a carbon, nitrogen and energy source. It relies on cobalamin (vitamin B12) both as a cofactor for the ethanolamine ammonia-lyase (EAL) activity and to induce the operon. EA enhances bacterial survival in macrophages in a concentration-dependent manner, suggesting it is an important nutrient during infection. This chain is Corrinoid adenosyltransferase EutT, found in Salmonella typhimurium (strain LT2 / SGSC1412 / ATCC 700720).